Reading from the N-terminus, the 189-residue chain is MPRVFLVRSRRPQPPNWSHLPDQLRGDAYVPDCSSLAVPPAHRSSGLRDTWAVSSQGTLTSAPKGPGTLGCPLCPKAFPLQRMLTRHLKCHSPARRHVCHYCGKGFHDAFDLKRHMRTHTGIRPFRCGACGKAFTQRCSLEAHLAKVHGQPASYAYRERREKLHVCEDCGFTSSRPDAYAQHRTLHRTT.

Positions 1–20 (MPRVFLVRSRRPQPPNWSHL) are disordered. 4 C2H2-type zinc fingers span residues 69–91 (LGCP…LKCH), 97–119 (HVCH…MRTH), 125–148 (FRCG…AKVH), and 164–186 (HVCE…RTLH).

Belongs to the krueppel C2H2-type zinc-finger protein family.

It is found in the nucleus. In terms of biological role, may act as a transcription regulator. In Mus musculus (Mouse), this protein is Putative transcription factor ovo-like protein 3 (Ovol3).